A 314-amino-acid chain; its full sequence is Taste receptor type 2 member 42 (314 aa).

Residues 1–7 lie on the Extracellular side of the membrane; the sequence is MATELDK. A helical transmembrane segment spans residues 8 to 28; that stretch reads IFLILAIAEFIISMLGNVFIG. Over 29 to 50 the chain is Cytoplasmic; sequence LVNCSEGIKNQKVFSADFILTC. The helical transmembrane segment at 51–71 threads the bilayer; it reads LAISTIGQLLVILFDSFLVGL. Residues 72 to 101 lie on the Extracellular side of the membrane; that stretch reads ASHLYTTYRLGKTVIMLWHMTNHLTTWLAT. The chain crosses the membrane as a helical span at residues 102–122; the sequence is CLSIFYFFKIAHFPHSLFLWL. Over 123-127 the chain is Cytoplasmic; sequence RWRMN. A helical transmembrane segment spans residues 128–148; sequence GMIVMLLILSLFLLIFDSLVL. The Extracellular segment spans residues 149–187; that stretch reads EIFIDISLNIIDKSNLTLYLDESKTLYDKLSILKTLLSL. A glycan (N-linked (GlcNAc...) asparagine) is linked at asparagine 163. Residues 188-208 traverse the membrane as a helical segment; that stretch reads TSFIPFSLFLTSLLFLFLSLV. At 209–238 the chain is on the cytoplasmic side; it reads RHTRNLKLSSLGSRDSSTEAHRRAMKMVMS. Residues 239–259 traverse the membrane as a helical segment; it reads FLFLFIVHFFSLQVANWIFFM. Topologically, residues 260–265 are extracellular; sequence LWNNKC. Residues 266-286 traverse the membrane as a helical segment; that stretch reads IKFVMLALNAFPSCHSFILIL. Residues 287 to 314 lie on the Cytoplasmic side of the membrane; that stretch reads GNSKLQQTAVRLLWHLRNYTKTPNPLPL.

This sequence belongs to the G-protein coupled receptor T2R family.

It localises to the membrane. In terms of biological role, receptor that may play a role in the perception of bitterness and is gustducin-linked. May play a role in sensing the chemical composition of the gastrointestinal content. The activity of this receptor may stimulate alpha gustducin, mediate PLC-beta-2 activation and lead to the gating of TRPM5. The polypeptide is Taste receptor type 2 member 42 (TAS2R42) (Homo sapiens (Human)).